The chain runs to 144 residues: MLIPKENRKAIHQALFSQGVLVAKKDFNLPKHPEVGVPNLQVIKACQSLDSRGYLKTRYNWGWFYYTLTNEGVEYLREYLHLPAEVVPATHKRQVRPTAPRAGRPEPRERASADAGYRRAEKKDEGAAPSGFAPSFRGGFGRPQ.

The interval 90–144 is disordered; it reads THKRQVRPTAPRAGRPEPRERASADAGYRRAEKKDEGAAPSGFAPSFRGGFGRPQ. Basic and acidic residues predominate over residues 103-126; that stretch reads GRPEPRERASADAGYRRAEKKDEG.

The protein belongs to the eukaryotic ribosomal protein eS10 family. As to quaternary structure, component of the small ribosomal subunit (SSU). Mature yeast ribosomes consist of a small (40S) and a large (60S) subunit. The 40S small subunit contains 1 molecule of ribosomal RNA (18S rRNA) and at least 33 different proteins. The large 60S subunit contains 3 rRNA molecules (25S, 5.8S and 5S rRNA) and at least 46 different proteins. eS10 interacts with GCN1 (via middle region); this interaction is direct and promotes GCN2 kinase activity.

Its subcellular location is the cytoplasm. Its function is as follows. Component of the ribosome, a large ribonucleoprotein complex responsible for the synthesis of proteins in the cell. The small ribosomal subunit (SSU) binds messenger RNAs (mRNAs) and translates the encoded message by selecting cognate aminoacyl-transfer RNA (tRNA) molecules. The large subunit (LSU) contains the ribosomal catalytic site termed the peptidyl transferase center (PTC), which catalyzes the formation of peptide bonds, thereby polymerizing the amino acids delivered by tRNAs into a polypeptide chain. The nascent polypeptides leave the ribosome through a tunnel in the LSU and interact with protein factors that function in enzymatic processing, targeting, and the membrane insertion of nascent chains at the exit of the ribosomal tunnel. eS10 plays a role as a positive regulator of the GCN2 kinase activity by stimulating GCN1-mediated GCN2 activation. This is Small ribosomal subunit protein eS10A (rps1001) from Schizosaccharomyces pombe (strain 972 / ATCC 24843) (Fission yeast).